Reading from the N-terminus, the 256-residue chain is Thiazole synthase (256 aa).

The active-site Schiff-base intermediate with DXP is the K98. Residues G159, 185 to 186 (AG), and 207 to 208 (NT) each bind 1-deoxy-D-xylulose 5-phosphate.

This sequence belongs to the ThiG family. In terms of assembly, homotetramer. Forms heterodimers with either ThiH or ThiS.

It is found in the cytoplasm. It carries out the reaction [ThiS sulfur-carrier protein]-C-terminal-Gly-aminoethanethioate + 2-iminoacetate + 1-deoxy-D-xylulose 5-phosphate = [ThiS sulfur-carrier protein]-C-terminal Gly-Gly + 2-[(2R,5Z)-2-carboxy-4-methylthiazol-5(2H)-ylidene]ethyl phosphate + 2 H2O + H(+). It functions in the pathway cofactor biosynthesis; thiamine diphosphate biosynthesis. Its function is as follows. Catalyzes the rearrangement of 1-deoxy-D-xylulose 5-phosphate (DXP) to produce the thiazole phosphate moiety of thiamine. Sulfur is provided by the thiocarboxylate moiety of the carrier protein ThiS. In vitro, sulfur can be provided by H(2)S. This Aliivibrio fischeri (strain MJ11) (Vibrio fischeri) protein is Thiazole synthase.